The chain runs to 500 residues: MSAEKKYVVALDQGTTSSRAIVFDQDANIVGTSQREFTQHYPKAGWVEHDPMEIWATQSSVFTEVLAKTGLRSEEIAAIGITNQRETTVVWEKATGKPIYNAIVWQCRRTAAICEELKARGLEEYVRENTGLVLDAYFSGTKVKWILDNVEGAREKAMNGELLFGTIDTWLVWKMTNGEVHVTDPTNASRTMLYNIRDLKWDEKMLDELGIPLSMLPEVKPSSEVYGYTTRGGGSRIPIAGIAGDQQSALFGQLCFEKGMAKNTYGTGCFLLMNTGTEPVRSSNGLLTTVAIGPKGEVNYALEGAVFMGGATVQWLRDELKLIHDARDTDYFASKVGDTNGVYLVPAFVGLGAPYWDPYARGTMVGLTRGANRNHIIRAALESIAYQSRDVLDAMQQDSGIKLAALKVDGGAVANDFLMQFQSDMMHTPVVRPTRIETTAMGAAFLAGLAVGFWKSSDELEDKFSVDREFIPQMSHEERNKLYHGWQKAVERSRRWAEED.

T15 provides a ligand contact to ADP. Residues T15, T16, and S17 each contribute to the ATP site. T15 lines the sn-glycerol 3-phosphate pocket. R19 serves as a coordination point for ADP. Sn-glycerol 3-phosphate is bound by residues R85, E86, Y137, and D245. Glycerol-binding residues include R85, E86, Y137, D245, and Q246. ADP contacts are provided by T267 and G310. Positions 267, 310, 314, and 411 each coordinate ATP. The ADP site is built by G411 and N415.

It belongs to the FGGY kinase family.

It catalyses the reaction glycerol + ATP = sn-glycerol 3-phosphate + ADP + H(+). Its pathway is polyol metabolism; glycerol degradation via glycerol kinase pathway; sn-glycerol 3-phosphate from glycerol: step 1/1. Its activity is regulated as follows. Inhibited by fructose 1,6-bisphosphate (FBP). Functionally, key enzyme in the regulation of glycerol uptake and metabolism. Catalyzes the phosphorylation of glycerol to yield sn-glycerol 3-phosphate. This is Glycerol kinase from Aeromonas salmonicida (strain A449).